The following is a 259-amino-acid chain: 5'-nucleotidase SurE (259 aa).

Asp-8, Asp-9, Ser-41, and Asn-99 together coordinate a divalent metal cation.

This sequence belongs to the SurE nucleotidase family. A divalent metal cation is required as a cofactor.

The protein resides in the cytoplasm. The catalysed reaction is a ribonucleoside 5'-phosphate + H2O = a ribonucleoside + phosphate. In terms of biological role, nucleotidase that shows phosphatase activity on nucleoside 5'-monophosphates. The sequence is that of 5'-nucleotidase SurE from Synechococcus sp. (strain JA-3-3Ab) (Cyanobacteria bacterium Yellowstone A-Prime).